The chain runs to 429 residues: UDP-N-acetylglucosamine 1-carboxyvinyltransferase (429 aa).

A phosphoenolpyruvate-binding site is contributed by 22–23 (KN). Arg102 is a binding site for UDP-N-acetyl-alpha-D-glucosamine. Catalysis depends on Cys126, which acts as the Proton donor. 2-(S-cysteinyl)pyruvic acid O-phosphothioketal is present on Cys126. Residues 131–135 (RPVDL), 171–174 (KVSV), Asp316, and Ile338 each bind UDP-N-acetyl-alpha-D-glucosamine.

It belongs to the EPSP synthase family. MurA subfamily.

The protein resides in the cytoplasm. It carries out the reaction phosphoenolpyruvate + UDP-N-acetyl-alpha-D-glucosamine = UDP-N-acetyl-3-O-(1-carboxyvinyl)-alpha-D-glucosamine + phosphate. It functions in the pathway cell wall biogenesis; peptidoglycan biosynthesis. Its function is as follows. Cell wall formation. Adds enolpyruvyl to UDP-N-acetylglucosamine. This Brucella abortus (strain S19) protein is UDP-N-acetylglucosamine 1-carboxyvinyltransferase.